The chain runs to 404 residues: Magnesium transporter NIPA4 (404 aa).

Topologically, residues 1–55 are extracellular; it reads MELRVSNTSCENGSLLHLYCSSQEVLCQIVNDLSPEVPSNATFHSWQERIRQNYG. N-linked (GlcNAc...) asparagine glycans are attached at residues N7, N12, and N40. A helical membrane pass occupies residues 56 to 76; sequence FYIGLGLAFLSSFLIGSSVIL. Residues 77 to 102 are Cytoplasmic-facing; it reads KKKGLLRLVATGATRAVDGGFGYLKD. A helical transmembrane segment spans residues 103–123; that stretch reads AMWWAGFLTMAAGEVANFGAY. Position 124 (A124) is a topological domain, extracellular. The helical transmembrane segment at 125–145 threads the bilayer; that stretch reads FAPATVVTPLGALSVLISAIL. Residues 146 to 153 are Cytoplasmic-facing; sequence SSYFLRES. A helical membrane pass occupies residues 154-174; sequence LNLLGKLGCVICVAGSTVMVI. Residues 175–195 are Extracellular-facing; that stretch reads HAPEEEKVTTIMEMASKMKDT. Residues 196 to 216 form a helical membrane-spanning segment; that stretch reads GFIVFAVLLLVSCLILIFVIA. Residues 217–223 lie on the Cytoplasmic side of the membrane; sequence PRYGQRN. The helical transmembrane segment at 224 to 244 threads the bilayer; that stretch reads ILIYIIICSVIGAFSVAAVKG. At 245–261 the chain is on the extracellular side; sequence LGITIKNFFQGLPVVRH. A helical membrane pass occupies residues 262–282; sequence PLPYILSLILALSLSTQVNFL. Over 283–293 the chain is Cytoplasmic; the sequence is NRALDIFNTSL. A helical membrane pass occupies residues 294-314; the sequence is VFPIYYVFFTTVVVTSSIILF. Residues 315 to 324 lie on the Extracellular side of the membrane; the sequence is KEWYSMSAVD. The helical transmembrane segment at 325–345 threads the bilayer; the sequence is IAGTLSGFVTIILGVFMLHAF. The Cytoplasmic portion of the chain corresponds to 346–404; the sequence is KDLDISCASLPHMHKNPPPSPAPEPTVIRLEDKNVLVDNIELASTSSPEEKPKVFIIHS.

The protein belongs to the NIPA family. Highly expressed in brain, lung, stomach, keratinocytes and leukocytes, and in all other tissues tested except liver, thyroid and fetal brain.

The protein resides in the cell membrane. It carries out the reaction Mg(2+)(in) = Mg(2+)(out). In terms of biological role, acts as a Mg(2+) transporter. Can also transport other divalent cations such as Ba(2+), Sr(2+) and Fe(2+) but to a much less extent than Mg(2+). May be a receptor for ligands (trioxilins A3 and B3) from the hepoxilin pathway. This is Magnesium transporter NIPA4 (NIPAL4) from Homo sapiens (Human).